We begin with the raw amino-acid sequence, 311 residues long: tRNA-cytidine(32) 2-sulfurtransferase (311 aa).

A PP-loop motif motif is present at residues 47–52; it reads SGGKDS. [4Fe-4S] cluster contacts are provided by Cys-122, Cys-125, and Cys-213.

It belongs to the TtcA family. As to quaternary structure, homodimer. Requires Mg(2+) as cofactor. [4Fe-4S] cluster is required as a cofactor.

It localises to the cytoplasm. The enzyme catalyses cytidine(32) in tRNA + S-sulfanyl-L-cysteinyl-[cysteine desulfurase] + AH2 + ATP = 2-thiocytidine(32) in tRNA + L-cysteinyl-[cysteine desulfurase] + A + AMP + diphosphate + H(+). Its pathway is tRNA modification. Its function is as follows. Catalyzes the ATP-dependent 2-thiolation of cytidine in position 32 of tRNA, to form 2-thiocytidine (s(2)C32). The sulfur atoms are provided by the cysteine/cysteine desulfurase (IscS) system. This is tRNA-cytidine(32) 2-sulfurtransferase from Escherichia coli O7:K1 (strain IAI39 / ExPEC).